Here is a 387-residue protein sequence, read N- to C-terminus: 3-ketoacyl-CoA thiolase (387 aa).

The active-site Acyl-thioester intermediate is Cys-91. Catalysis depends on proton acceptor residues His-343 and Cys-373.

It belongs to the thiolase-like superfamily. Thiolase family. As to quaternary structure, heterotetramer of two alpha chains (FadB) and two beta chains (FadA).

The protein localises to the cytoplasm. The enzyme catalyses an acyl-CoA + acetyl-CoA = a 3-oxoacyl-CoA + CoA. It functions in the pathway lipid metabolism; fatty acid beta-oxidation. Its function is as follows. Catalyzes the final step of fatty acid oxidation in which acetyl-CoA is released and the CoA ester of a fatty acid two carbons shorter is formed. In Shewanella baltica (strain OS185), this protein is 3-ketoacyl-CoA thiolase.